Here is a 366-residue protein sequence, read N- to C-terminus: MTDLTNQKDAALAAIAAATSLDALEEQRVAALGKKGWVSLALKTLGGMDPEERQKAAPAIQAVRAEVADAIAARKDALEREALEAQLATETLDLTLPAPQQRFGSVHPVSQVMDELAEIFADLGFAVATGPEIEDDWHNFTALNMAETHPARAMHDTFYFPDVDSEGRRMLLRTHTSPVQIRAMKAQGAPIRIIAPGRVYRSDSDATHTPMFHQVEGLVIDRDIHLGHLKWTLETFLKAFFEREDIVLRLRPSYFPFTEPSVEVDVGYSREGGRRVVGGDGNAEGHDWMELLGSGMVNRRVIEMAGLDPDEWQGFAWGLGVDRLAMLKYGMDDLRAFFDGDQRWLDHYGFSPFDQPTLSAGVGARS.

Glutamate 259 is a Mg(2+) binding site.

It belongs to the class-II aminoacyl-tRNA synthetase family. Phe-tRNA synthetase alpha subunit type 1 subfamily. In terms of assembly, tetramer of two alpha and two beta subunits. It depends on Mg(2+) as a cofactor.

It localises to the cytoplasm. It catalyses the reaction tRNA(Phe) + L-phenylalanine + ATP = L-phenylalanyl-tRNA(Phe) + AMP + diphosphate + H(+). The protein is Phenylalanine--tRNA ligase alpha subunit of Erythrobacter litoralis (strain HTCC2594).